We begin with the raw amino-acid sequence, 346 residues long: Lysyl aminopeptidase (346 aa).

His63 and Asp177 together coordinate Zn(2+). Catalysis depends on Glu207, which acts as the Proton acceptor. Positions 208, 230, and 314 each coordinate Zn(2+).

Homotetramer. Requires Zn(2+) as cofactor.

It carries out the reaction Preferentially, release of N-terminal lysine.. In terms of biological role, hydrolyzes di-, tri- and tetrapeptides with a lysine as the N-terminal amino acid and with Gly, Lys, Ala, Phe or Glu in the second position. The sequence is that of Lysyl aminopeptidase from Pyrococcus furiosus (strain ATCC 43587 / DSM 3638 / JCM 8422 / Vc1).